A 360-amino-acid chain; its full sequence is Photosystem II protein D1 1 (360 aa).

Transmembrane regions (helical) follow at residues 29 to 46 (YVGWFGVLMIPTLLTATT), 118 to 133 (HFLIGVFCYMGREWEL), and 142 to 156 (WICVAFSAPVAAATA). Chlorophyll a is bound at residue His-118. Tyr-126 contributes to the pheophytin a binding site. Asp-170 and Glu-189 together coordinate [CaMn4O5] cluster. The chain crosses the membrane as a helical span at residues 197–218 (FHMLGVAGVFGGSLFSAMHGSL). Residue His-198 participates in chlorophyll a binding. Residues His-215 and 264–265 (SF) contribute to the a quinone site. Fe cation is bound at residue His-215. Residue His-272 coordinates Fe cation. The chain crosses the membrane as a helical span at residues 274–288 (FLGAWPVVGIWFTAL). [CaMn4O5] cluster contacts are provided by His-332, Glu-333, Asp-342, and Ala-344. Positions 345–360 (AGEQAPVALQAPAING) are excised as a propeptide.

This sequence belongs to the reaction center PufL/M/PsbA/D family. As to quaternary structure, PSII is composed of 1 copy each of membrane proteins PsbA, PsbB, PsbC, PsbD, PsbE, PsbF, PsbH, PsbI, PsbJ, PsbK, PsbL, PsbM, PsbT, PsbX, PsbY, PsbZ, Psb30/Ycf12, peripheral proteins PsbO, CyanoQ (PsbQ), PsbU, PsbV and a large number of cofactors. It forms dimeric complexes. The cofactor is The D1/D2 heterodimer binds P680, chlorophylls that are the primary electron donor of PSII, and subsequent electron acceptors. It shares a non-heme iron and each subunit binds pheophytin, quinone, additional chlorophylls, carotenoids and lipids. D1 provides most of the ligands for the Mn4-Ca-O5 cluster of the oxygen-evolving complex (OEC). There is also a Cl(-1) ion associated with D1 and D2, which is required for oxygen evolution. The PSII complex binds additional chlorophylls, carotenoids and specific lipids.. In terms of processing, tyr-161 forms a radical intermediate that is referred to as redox-active TyrZ, YZ or Y-Z. Post-translationally, C-terminally processed by CtpA; processing is essential to allow assembly of the oxygen-evolving complex and thus photosynthetic growth.

It is found in the cellular thylakoid membrane. The enzyme catalyses 2 a plastoquinone + 4 hnu + 2 H2O = 2 a plastoquinol + O2. Functionally, photosystem II (PSII) is a light-driven water:plastoquinone oxidoreductase that uses light energy to abstract electrons from H(2)O, generating O(2) and a proton gradient subsequently used for ATP formation. It consists of a core antenna complex that captures photons, and an electron transfer chain that converts photonic excitation into a charge separation. The D1/D2 (PsbA/PsbD) reaction center heterodimer binds P680, the primary electron donor of PSII as well as several subsequent electron acceptors. The polypeptide is Photosystem II protein D1 1 (Picosynechococcus sp. (strain ATCC 27264 / PCC 7002 / PR-6) (Agmenellum quadruplicatum)).